The primary structure comprises 793 residues: Toll-like receptor 6 (793 aa).

The first 23 residues, 1–23 (MIKDKESPIRSCHFVYIVALVFG), serve as a signal peptide directing secretion. At 24-584 (TIIQFSDESE…FQVSELSCNT (561 aa)) the chain is on the extracellular side. LRR repeat units lie at residues 54–77 (TKVL…FLSG), 78–101 (LRVL…FNHD), 102–122 (LEYL…PITT), 123–147 (TLKH…GNLT), 148–168 (QLNF…LPIA), 169–196 (HLHL…ILNT), 197–219 (KKLH…SANS), 220–250 (LGCL…GGPT), 251–277 (LLNF…WPKP), 278–303 (IEYL…YKTT), 304–330 (LKAL…VFSE), 331–354 (MNIL…EPST), 355–378 (FKFL…TLAR), 379–404 (LETL…DMLS), 405–428 (LETL…SWVG), 429–449 (SIVV…RCLP), 450–473 (PRIK…TGLE), 474–495 (TLQE…GIFS), and 496–519 (SLSI…QSCQ). Asn63 carries an N-linked (GlcNAc...) asparagine glycan. Cys117 and Cys140 are oxidised to a cystine. N-linked (GlcNAc...) asparagine glycosylation is present at Asn145. An intrachain disulfide couples Cys235 to Cys265. Residues Asn253 and Asn285 are each glycosylated (N-linked (GlcNAc...) asparagine). Cysteines 348 and 373 form a disulfide. Asn359 is a glycosylation site (N-linked (GlcNAc...) asparagine). Asn423 and Asn434 each carry an N-linked (GlcNAc...) asparagine glycan. Cysteines 424 and 447 form a disulfide. The 56-residue stretch at 520-575 (KIRSLKAGNNPFQCSCELRDFIQSVGQVSSDVVEGWPESYKCDYPESYKGTPLKDF) folds into the LRRCT domain. The helical transmembrane segment at 585–605 (ALLIITIVVPGLVLAVAVTVL) threads the bilayer. The Cytoplasmic portion of the chain corresponds to 606 to 793 (CIYLDLPWYL…KLMEKAAEIH (188 aa)). The region spanning 640 to 781 (LQFHAFISYS…LFWANLRASI (142 aa)) is the TIR domain.

This sequence belongs to the Toll-like receptor family. Homodimer (via cytoplasmic TIR domain). Heterodimer with TLR2 via their respective extracellular domains. Binds MYD88 via their respective TIR domains. Interacts with CD36, following CD36 stimulation by oxLDL or amyloid-beta 42, and forms a heterodimer with TLR4. The trimeric complex is internalized and triggers inflammatory response. LYN kinase activity facilitates TLR4-TLR6 heterodimerization and signal initiation. The heterodimer TLR2:TLR6 interacts with CD14 and CD36 in response to triacylated lipopeptides. In terms of tissue distribution, highest expression levels seen in blood and lymph node, intermediate expression seen in spleen and lowest expression seen in the liver, lung and udder cistern.

It localises to the cell membrane. The protein localises to the cytoplasmic vesicle. The protein resides in the phagosome membrane. It is found in the membrane raft. Its subcellular location is the golgi apparatus. In terms of biological role, participates in the innate immune response to Gram-positive bacteria and fungi. Specifically recognizes diacylated and, to a lesser extent, triacylated lipopeptides. In response to diacylated lipopeptides, forms the activation cluster TLR2:TLR6:CD14:CD36, this cluster triggers signaling from the cell surface and subsequently is targeted to the Golgi in a lipid-raft dependent pathway. Acts via MYD88 and TRAF6, leading to NF-kappa-B activation, cytokine secretion and the inflammatory response. Recognizes mycoplasmal macrophage-activating lipopeptide-2kD (MALP-2), soluble tuberculosis factor (STF), phenol-soluble modulin (PSM) and B.burgdorferi outer surface protein A lipoprotein (OspA-L) cooperatively with TLR2. In complex with TLR4, promotes sterile inflammation in monocytes/macrophages in response to oxidized low-density lipoprotein (oxLDL) or amyloid-beta 42. In this context, the initial signal is provided by oxLDL- or amyloid-beta 42-binding to CD36. This event induces the formation of a heterodimer of TLR4 and TLR6, which is rapidly internalized and triggers inflammatory response, leading to the NF-kappa-B-dependent production of CXCL1, CXCL2 and CCL9 cytokines, via MYD88 signaling pathway, and CCL5 cytokine, via TICAM1 signaling pathway, as well as IL1B secretion. This chain is Toll-like receptor 6, found in Bos taurus (Bovine).